A 136-amino-acid chain; its full sequence is MRGHSALMMAVVTLAAVSSGAAEVANTAAVSSDYLIGTILTFAESDRLLRVNDVDDVPVYHYPPEKGKRTTFFEDRMKKKLANPEKIRRLYWKWYSMGYSAREVVQHLDQTDNRELKEIYHNLGVGYAEFVAKMNV.

Residues 1–22 (MRGHSALMMAVVTLAAVSSGAA) form the signal peptide. The short motif at 47–50 (RLLR) is the RxLR element.

It belongs to the RxLR effector family.

Its subcellular location is the secreted. It is found in the host nucleus. It localises to the host cytoplasm. In terms of biological role, effector that completely suppresses the host cell death induced by cell death-inducing proteins. This chain is Secreted RxLR effector protein 15, found in Plasmopara viticola (Downy mildew of grapevine).